The chain runs to 549 residues: Probable protein kinase UbiB (549 aa).

The 382-residue stretch at 123-504 (DFDETALASA…QRNNTGFSRL (382 aa)) folds into the Protein kinase domain. Residues 129-137 (LASASIAQV) and Lys-156 each bind ATP. Asp-291 functions as the Proton acceptor in the catalytic mechanism. Residues 505 to 525 (MILGIAIAGTFWKFEMLPLWV) traverse the membrane as a helical segment.

It belongs to the ABC1 family. UbiB subfamily.

It localises to the cell inner membrane. The protein operates within cofactor biosynthesis; ubiquinone biosynthesis [regulation]. Its function is as follows. Is probably a protein kinase regulator of UbiI activity which is involved in aerobic coenzyme Q (ubiquinone) biosynthesis. This Glaesserella parasuis serovar 5 (strain SH0165) (Haemophilus parasuis) protein is Probable protein kinase UbiB.